The primary structure comprises 481 residues: Glutamyl-tRNA(Gln) amidotransferase subunit A (481 aa).

Catalysis depends on charge relay system residues K76 and S151. The active-site Acyl-ester intermediate is the S175.

This sequence belongs to the amidase family. GatA subfamily. Heterotrimer of A, B and C subunits.

It carries out the reaction L-glutamyl-tRNA(Gln) + L-glutamine + ATP + H2O = L-glutaminyl-tRNA(Gln) + L-glutamate + ADP + phosphate + H(+). In terms of biological role, allows the formation of correctly charged Gln-tRNA(Gln) through the transamidation of misacylated Glu-tRNA(Gln) in organisms which lack glutaminyl-tRNA synthetase. The reaction takes place in the presence of glutamine and ATP through an activated gamma-phospho-Glu-tRNA(Gln). This chain is Glutamyl-tRNA(Gln) amidotransferase subunit A, found in Chlorobaculum tepidum (strain ATCC 49652 / DSM 12025 / NBRC 103806 / TLS) (Chlorobium tepidum).